Reading from the N-terminus, the 175-residue chain is Putative carbonic anhydrase-like protein YbcF (175 aa).

Belongs to the beta-class carbonic anhydrase family.

The chain is Putative carbonic anhydrase-like protein YbcF (ybcF) from Bacillus subtilis (strain 168).